We begin with the raw amino-acid sequence, 299 residues long: Ribosomal RNA small subunit methyltransferase H (299 aa).

Residues 36–38 (GGH), D55, D103, and Q110 each bind S-adenosyl-L-methionine. Composition is skewed to basic and acidic residues over residues 268–282 (KPVR…ENPR) and 289–299 (RAAERIEKGGD). The interval 268–299 (KPVRPSEEEIRENPRARSGRLRAAERIEKGGD) is disordered.

It belongs to the methyltransferase superfamily. RsmH family.

The protein resides in the cytoplasm. The catalysed reaction is cytidine(1402) in 16S rRNA + S-adenosyl-L-methionine = N(4)-methylcytidine(1402) in 16S rRNA + S-adenosyl-L-homocysteine + H(+). In terms of biological role, specifically methylates the N4 position of cytidine in position 1402 (C1402) of 16S rRNA. In Thermotoga petrophila (strain ATCC BAA-488 / DSM 13995 / JCM 10881 / RKU-1), this protein is Ribosomal RNA small subunit methyltransferase H.